Consider the following 291-residue polypeptide: Pituitary-specific positive transcription factor 1 (291 aa).

The short motif at 5–13 (AFTSADTFI) is the 9aaTAD element. Positions 124 to 198 (MDSPEIRELE…ILSKWLEEAE (75 aa)) constitute a POU-specific domain. The homeobox DNA-binding region spans 214 to 273 (KRKRRTTISIAAKDALERHFGEQNKPSSQEIMRMAEELNLEKEVVRVWFCNRRQREKRVK).

The protein belongs to the POU transcription factor family. Class-1 subfamily. As to quaternary structure, interacts with PITX1. Interacts with LHX3. Interacts with ELK1.

The protein localises to the nucleus. In terms of biological role, transcription factor involved in the specification of the lactotrope, somatotrope, and thyrotrope phenotypes in the developing anterior pituitary. Specifically binds to the consensus sequence 5'-TAAAT-3'. Activates growth hormone and prolactin genes. The protein is Pituitary-specific positive transcription factor 1 (POU1F1) of Homo sapiens (Human).